Here is a 146-residue protein sequence, read N- to C-terminus: Globin (146 aa).

Ala1 is modified (N-acetylalanine). Residues Ala1 to Lys146 enclose the Globin domain. A heme b-binding site is contributed by His95.

Belongs to the globin family. As to quaternary structure, monomer.

The polypeptide is Globin (Dolabella auricularia (Shoulderblade sea cat)).